Reading from the N-terminus, the 608-residue chain is Isocitrate dehydrogenase kinase/phosphatase (608 aa).

ATP-binding positions include 327-333 and Lys-348; that span reads APGIKGL. The active site involves Asp-383. Residues 589–608 form a disordered region; the sequence is FDSTPDAGDGDSAGDAQRAA.

Belongs to the AceK family.

The protein localises to the cytoplasm. It catalyses the reaction L-seryl-[isocitrate dehydrogenase] + ATP = O-phospho-L-seryl-[isocitrate dehydrogenase] + ADP + H(+). Functionally, bifunctional enzyme which can phosphorylate or dephosphorylate isocitrate dehydrogenase (IDH) on a specific serine residue. This is a regulatory mechanism which enables bacteria to bypass the Krebs cycle via the glyoxylate shunt in response to the source of carbon. When bacteria are grown on glucose, IDH is fully active and unphosphorylated, but when grown on acetate or ethanol, the activity of IDH declines drastically concomitant with its phosphorylation. This is Isocitrate dehydrogenase kinase/phosphatase from Burkholderia ambifaria (strain MC40-6).